We begin with the raw amino-acid sequence, 386 residues long: ATP phosphoribosyltransferase regulatory subunit (386 aa).

The protein belongs to the class-II aminoacyl-tRNA synthetase family. HisZ subfamily. As to quaternary structure, heteromultimer composed of HisG and HisZ subunits.

It localises to the cytoplasm. The protein operates within amino-acid biosynthesis; L-histidine biosynthesis; L-histidine from 5-phospho-alpha-D-ribose 1-diphosphate: step 1/9. Functionally, required for the first step of histidine biosynthesis. May allow the feedback regulation of ATP phosphoribosyltransferase activity by histidine. This chain is ATP phosphoribosyltransferase regulatory subunit, found in Ralstonia nicotianae (strain ATCC BAA-1114 / GMI1000) (Ralstonia solanacearum).